Reading from the N-terminus, the 583-residue chain is Malonate--CoA ligase ACSF3, mitochondrial (583 aa).

The N-terminal 27 residues, 1–27 (MPPHLALPFRRLFWSLASSQLIPRRHR), are a transit peptide targeting the mitochondrion. Residues 202–210 (TSGTTGRPK), aspartate 455, arginine 469, and lysine 561 contribute to the ATP site.

This sequence belongs to the ATP-dependent AMP-binding enzyme family.

The protein localises to the mitochondrion. It catalyses the reaction tetracosanoate + ATP + CoA = tetracosanoyl-CoA + AMP + diphosphate. The enzyme catalyses malonate + ATP + CoA = malonyl-CoA + AMP + diphosphate. Catalyzes the initial reaction in intramitochondrial fatty acid synthesis, by activating malonate and methylmalonate, but not acetate, into their respective CoA thioester. May have some preference toward very-long-chain substrates. The sequence is that of Malonate--CoA ligase ACSF3, mitochondrial from Mus musculus (Mouse).